The primary structure comprises 211 residues: uncharacterized protein (211 aa).

This is an uncharacterized protein from Archaeoglobus fulgidus (strain ATCC 49558 / DSM 4304 / JCM 9628 / NBRC 100126 / VC-16).